A 248-amino-acid polypeptide reads, in one-letter code: Probable transcriptional regulatory protein PSPTO_3980 (248 aa).

Belongs to the TACO1 family.

The protein localises to the cytoplasm. This Pseudomonas syringae pv. tomato (strain ATCC BAA-871 / DC3000) protein is Probable transcriptional regulatory protein PSPTO_3980.